Consider the following 343-residue polypeptide: Ornithine carbamoyltransferase, catabolic (343 aa).

62–65 contacts carbamoyl phosphate; sequence STRT. Ni(2+) is bound at residue His79. Carbamoyl phosphate contacts are provided by residues Gln89, Arg113, and 140-143; that span reads HPTQ. Residues Asn172, Asp236, and 240–241 contribute to the L-ornithine site; that span reads SM. Carbamoyl phosphate contacts are provided by residues 278 to 279 and Arg323; that span reads CL.

It belongs to the aspartate/ornithine carbamoyltransferase superfamily. OTCase family. As to quaternary structure, homohexamer; dimer of trimers. Ni(2+) serves as cofactor.

It is found in the cytoplasm. It carries out the reaction carbamoyl phosphate + L-ornithine = L-citrulline + phosphate + H(+). It functions in the pathway amino-acid degradation; L-arginine degradation via ADI pathway; carbamoyl phosphate from L-arginine: step 2/2. Its function is as follows. Involved in the catabolism of arginine. Catalyzes the phosphorolysis of citrulline, the reverse reaction of the biosynthetic one, yielding ornithine and carbamoyl phosphate which serve to generate ATP from ADP. The chain is Ornithine carbamoyltransferase, catabolic from Lentilactobacillus hilgardii (Lactobacillus hilgardii).